We begin with the raw amino-acid sequence, 386 residues long: Decapping nuclease RAI1 (386 aa).

Arg34 provides a ligand contact to substrate. Glu159 is a binding site for a divalent metal cation. Substrate is bound at residue Glu205. Positions 207, 225, and 226 each coordinate a divalent metal cation. Substrate-binding residues include Lys227 and Gln251.

Belongs to the DXO/Dom3Z family. Interacts with RAT1; the interaction is direct, stabilizes RAT1 protein structure and stimulates its exoribonuclease activity. The interaction also stimulates RAI1 pyrophosphohydrolase activity, probably by recruiting it to mRNA substrates. A divalent metal cation serves as cofactor.

It is found in the nucleus. It catalyses the reaction a 5'-end NAD(+)-phospho-ribonucleoside in mRNA + H2O = a 5'-end phospho-ribonucleoside in mRNA + NAD(+) + H(+). It carries out the reaction a 5'-end (N(7)-methyl 5'-triphosphoguanosine)-ribonucleoside-ribonucleotide in mRNA + H2O = a (N(7)-methyl 5'-triphosphoguanosine)-nucleoside + a 5'-end phospho-ribonucleoside in mRNA + H(+). The catalysed reaction is a 5'-end triphospho-ribonucleoside in mRNA + H2O = a 5'-end phospho-ribonucleoside in mRNA + diphosphate + H(+). Functionally, decapping enzyme for NAD-capped RNAs: specifically hydrolyzes the nicotinamide adenine dinucleotide (NAD) cap from a subset of RNAs by removing the entire NAD moiety from the 5'-end of an NAD-capped RNA. The NAD-cap is present at the 5'-end of some RNAs and snoRNAs. In contrast to the canonical 5'-end N7 methylguanosine (m7G) cap, the NAD cap promotes mRNA decay. Also acts as a non-canonical decapping enzyme that removes the entire cap structure of m7G capped or incompletely capped RNAs. Has decapping activity toward incomplete 5'-end m7G cap mRNAs such as unmethylated 5'-end-capped RNA (cap0), while it has no activity toward 2'-O-ribose methylated m7G cap (cap1). Also possesses RNA 5'-pyrophosphohydrolase activity by hydrolyzing the 5'-end triphosphate to release pyrophosphates. Stimulates exoribonuclease activity of Rat1, allowing it to degrade RNAs with stable secondary structure more effectively. The polypeptide is Decapping nuclease RAI1 (RAI1) (Cryptococcus neoformans var. neoformans serotype D (strain B-3501A) (Filobasidiella neoformans)).